The sequence spans 159 residues: Protein A40 (159 aa).

At 1–9 (MNKHKTDYA) the chain is on the cytoplasmic side. A helical; Signal-anchor for type II membrane protein transmembrane segment spans residues 10-30 (GYACCVICGLIVGIIFTATLL). At 31–159 (KVVERKLVHT…TPKLHSCYTI (129 aa)) the chain is on the extracellular side. The region spanning 63–159 (YNNKCIHLST…TPKLHSCYTI (97 aa)) is the C-type lectin domain.

Belongs to the poxviridae A40 protein family.

The protein localises to the host membrane. In Bos taurus (Bovine), this protein is Protein A40.